The chain runs to 519 residues: Serine/threonine-protein kinase RIO1 (519 aa).

Over residues 1–10 (MTPAPEPQDP) the composition is skewed to pro residues. The interval 1-54 (MTPAPEPQDPPTIHEPVATEQTDDISDWDVESDYEDGYGAPSKSQAQGGASAAD) is disordered. Over residues 21–36 (QTDDISDWDVESDYED) the composition is skewed to acidic residues. Over residues 39 to 53 (GAPSKSQAQGGASAA) the composition is skewed to low complexity. Residues 122–519 (SEIYGTISTG…KLVAANKKRK (398 aa)) enclose the Protein kinase domain. 2 residues coordinate ATP: Lys-154 and Leu-228. Asp-281 serves as the catalytic Proton acceptor. Mg(2+) is bound by residues Asn-286 and Asp-298. Asp-298 serves as the catalytic 4-aspartylphosphate intermediate. The disordered stretch occupies residues 418-519 (ADSKVPESTG…KLVAANKKRK (102 aa)). The span at 439-464 (GSEDEEGDEGESGEVESGDEEREEGE) shows a compositional bias: acidic residues. Residues 440-519 (SEDEEGDEGE…KLVAANKKRK (80 aa)) are association with (pre-)40S ribosomal particle. Composition is skewed to basic residues over residues 470-489 (KKRP…AHKM) and 497-519 (EKRK…KKRK).

This sequence belongs to the protein kinase superfamily. RIO-type Ser/Thr kinase family. Mg(2+) is required as a cofactor. Autophosphorylated.

The protein resides in the cytoplasm. The catalysed reaction is L-seryl-[protein] + ATP = O-phospho-L-seryl-[protein] + ADP + H(+). The enzyme catalyses L-threonyl-[protein] + ATP = O-phospho-L-threonyl-[protein] + ADP + H(+). It catalyses the reaction ATP + H2O = ADP + phosphate + H(+). Functionally, involved in the final steps of cytoplasmic maturation of the 40S ribosomal subunit. In vitro, has strong ATPase activity and only low protein kinase activity. In Chaetomium thermophilum (strain DSM 1495 / CBS 144.50 / IMI 039719) (Thermochaetoides thermophila), this protein is Serine/threonine-protein kinase RIO1.